The sequence spans 314 residues: Malate dehydrogenase (314 aa).

Residues 13–18 and Asp-37 each bind NAD(+); that span reads GGGQIG. 2 residues coordinate substrate: Arg-88 and Arg-94. NAD(+) contacts are provided by residues Asn-101 and 124-126; that span reads VAN. 2 residues coordinate substrate: Asn-126 and Arg-157. His-181 acts as the Proton acceptor in catalysis.

The protein belongs to the LDH/MDH superfamily. MDH type 3 family.

The catalysed reaction is (S)-malate + NAD(+) = oxaloacetate + NADH + H(+). In terms of biological role, catalyzes the reversible oxidation of malate to oxaloacetate. The sequence is that of Malate dehydrogenase from Myxococcus xanthus.